The primary structure comprises 95 residues: Co-chaperonin GroES (95 aa).

Belongs to the GroES chaperonin family. As to quaternary structure, heptamer of 7 subunits arranged in a ring. Interacts with the chaperonin GroEL.

It localises to the cytoplasm. In terms of biological role, together with the chaperonin GroEL, plays an essential role in assisting protein folding. The GroEL-GroES system forms a nano-cage that allows encapsulation of the non-native substrate proteins and provides a physical environment optimized to promote and accelerate protein folding. GroES binds to the apical surface of the GroEL ring, thereby capping the opening of the GroEL channel. This Cereibacter sphaeroides (strain KD131 / KCTC 12085) (Rhodobacter sphaeroides) protein is Co-chaperonin GroES.